A 180-amino-acid chain; its full sequence is Large ribosomal subunit protein uL5 (180 aa).

It belongs to the universal ribosomal protein uL5 family. Part of the 50S ribosomal subunit; part of the 5S rRNA/L5/L18/L25 subcomplex. Contacts the 5S rRNA and the P site tRNA. Forms a bridge to the 30S subunit in the 70S ribosome.

Its function is as follows. This is one of the proteins that bind and probably mediate the attachment of the 5S RNA into the large ribosomal subunit, where it forms part of the central protuberance. In the 70S ribosome it contacts protein S13 of the 30S subunit (bridge B1b), connecting the 2 subunits; this bridge is implicated in subunit movement. Contacts the P site tRNA; the 5S rRNA and some of its associated proteins might help stabilize positioning of ribosome-bound tRNAs. This Rippkaea orientalis (strain PCC 8801 / RF-1) (Cyanothece sp. (strain PCC 8801)) protein is Large ribosomal subunit protein uL5.